A 158-amino-acid chain; its full sequence is Protein FAM177B (158 aa).

The span at 36–48 (EYSTEEEEEEEKE) shows a compositional bias: acidic residues. Residues 36–59 (EYSTEEEEEEEKEEQSTNSTLDPS) form a disordered region.

The protein belongs to the FAM177 family.

This Homo sapiens (Human) protein is Protein FAM177B (FAM177B).